The chain runs to 357 residues: 2-oxoglutarate-dependent dioxygenase 11 (357 aa).

Residues 207 to 307 enclose the Fe2OG dioxygenase domain; that stretch reads QPRGLRMAYY…RISAALFHYP (101 aa). Positions 231, 233, and 288 each coordinate Fe cation. Arginine 298 is a binding site for 2-oxoglutarate.

The protein belongs to the iron/ascorbate-dependent oxidoreductase family. It depends on Fe(2+) as a cofactor. The cofactor is L-ascorbate. Expressed in shoots.

It localises to the cytoplasm. It catalyses the reaction melatonin + 2-oxoglutarate + O2 = 2-hydroxymelatonin + succinate + CO2. Involved in melatonin degradation. Catalyzes the hydroxylation of melatonin to produce 2-hydroxymelatonin. This is 2-oxoglutarate-dependent dioxygenase 11 from Oryza sativa subsp. japonica (Rice).